The chain runs to 551 residues: Protein PNS1 (551 aa).

Positions 1 to 72 (MSAQEFYQGG…TGGQPVYQDT (72 aa)) are disordered. The Cytoplasmic portion of the chain corresponds to 1-94 (MSAQEFYQGG…RMNPRKRVND (94 aa)). The segment covering 8–19 (QGGNQRGYQQQQ) has biased composition (low complexity). The span at 45–63 (PPNYNMKPSQPYASTNPET) shows a compositional bias: polar residues. Residues 95-115 (IIPLILFIAAVVGFAVVSGIA) traverse the membrane as a helical segment. The Extracellular segment spans residues 116–147 (IHGFVQVNGLGGGMGDSSIGRTGSSITLDYHT). Residues 148 to 168 (VYLLLVVVALGLVIASLYLAA) traverse the membrane as a helical segment. Topologically, residues 169-177 (LRAFTKIIL) are cytoplasmic. The helical transmembrane segment at 178–198 (EVTLALTVILNIGICIYYFII) threads the bilayer. The Extracellular segment spans residues 199-200 (QY). The helical transmembrane segment at 201–221 (WSGAIIFLIIALVSVFFYWGM) threads the bilayer. The Cytoplasmic segment spans residues 222–244 (RKRIPLAKLLLQTTIDVTKHHPS). Residues 245 to 265 (VYVVVFIGLIIQAAVSVWYTF) traverse the membrane as a helical segment. Residues 266-307 (TCIAIYVKWTPGSAACSDGGCSSSKVAGLVFYATFSYLWLSQ) lie on the Extracellular side of the membrane. The chain crosses the membrane as a helical span at residues 308-328 (VIGNVILCTLAGGVFGGWYYY). The Cytoplasmic segment spans residues 329–356 (GPRTPGGGVPKRASLLAFVRASTLSLGS). Residues 357–377 (IAFGSLLVTILELLRLILQLF) form a helical membrane-spanning segment. Topologically, residues 378-386 (RQYEAGQGD) are extracellular. The helical transmembrane segment at 387–407 (MIGSILICIAQCCIGCIQWMV) threads the bilayer. The Cytoplasmic segment spans residues 408–452 (EYFNKYAYIEIALYGKSYIPAAKDTWRLLKDRGIDALVNDSLVGT). A helical membrane pass occupies residues 453-473 (ALMWGAYINGFLCAVLGYFYL). At 474–488 (RFTHPAYNSDGQYSA) the chain is on the extracellular side. The helical transmembrane segment at 489–509 (PVILFSFLIGLNESFTVGSAI) threads the bilayer. The Cytoplasmic portion of the chain corresponds to 510–551 (DAGVSTIFVGLGEDPMVLAERSPGLFEMIRQVYPRVVQGVPH).

The protein belongs to the CTL (choline transporter-like) family.

The protein resides in the cell membrane. Functionally, probably involved in transport through the plasma membrane. This is Protein PNS1 (PNS1) from Cryptococcus neoformans var. neoformans serotype D (strain B-3501A) (Filobasidiella neoformans).